Here is a 144-residue protein sequence, read N- to C-terminus: uncharacterized protein (144 aa).

Positions 125–135 (PQQQNNHQLQS) are enriched in polar residues. The segment at 125-144 (PQQQNNHQLQSKPKAASISR) is disordered.

This is an uncharacterized protein from Rickettsia prowazekii (strain Madrid E).